A 100-amino-acid polypeptide reads, in one-letter code: Ferredoxin-2 (100 aa).

The 2Fe-2S ferredoxin-type domain maps to 4–97 (YKVTLINEEE…DCTIMTHQES (94 aa)). Positions 42, 47, 50, and 81 each coordinate [2Fe-2S] cluster.

The protein belongs to the 2Fe2S plant-type ferredoxin family. It depends on [2Fe-2S] cluster as a cofactor.

Functionally, ferredoxins are iron-sulfur proteins that transfer electrons in a wide variety of metabolic reactions. The polypeptide is Ferredoxin-2 (Aphanothece sacrum).